Here is a 720-residue protein sequence, read N- to C-terminus: Glutaryl-7-aminocephalosporanic-acid acylase (720 aa).

Residues 1–29 (MLRVLHRAASALVMATVIGLAPAVAFALA) form the signal peptide. The propeptide at 190–198 (DPPDLADQG) is spacer peptide. Residue serine 199 is the Nucleophile of the active site. Active-site residues include histidine 221 and glutamate 653.

This sequence belongs to the peptidase S45 family. In terms of assembly, heterotetramer of two alpha and two beta subunits processed from the same precursor.

The protein resides in the periplasm. It catalyses the reaction (7R)-7-(4-carboxybutanamido)cephalosporanate + H2O = (7R)-7-aminocephalosporanate + glutarate. In terms of biological role, catalyzes the deacylation of 7 beta-(4-carboxybutanamido)cephalosporanic acid (glutaryl-7-aminocephalosporanic acid or GL-7-ACA) to 7-aminocephalosporanic acid (7-ACA). The polypeptide is Glutaryl-7-aminocephalosporanic-acid acylase (Pseudomonas sp. (strain SY-77)).